Reading from the N-terminus, the 470-residue chain is ATP synthase subunit beta (470 aa).

Residue 148–155 (GGAGVGKT) coordinates ATP.

The protein belongs to the ATPase alpha/beta chains family. In terms of assembly, F-type ATPases have 2 components, CF(1) - the catalytic core - and CF(0) - the membrane proton channel. CF(1) has five subunits: alpha(3), beta(3), gamma(1), delta(1), epsilon(1). CF(0) has three main subunits: a(1), b(2) and c(9-12). The alpha and beta chains form an alternating ring which encloses part of the gamma chain. CF(1) is attached to CF(0) by a central stalk formed by the gamma and epsilon chains, while a peripheral stalk is formed by the delta and b chains.

It is found in the cell inner membrane. The catalysed reaction is ATP + H2O + 4 H(+)(in) = ADP + phosphate + 5 H(+)(out). Produces ATP from ADP in the presence of a proton gradient across the membrane. The catalytic sites are hosted primarily by the beta subunits. The sequence is that of ATP synthase subunit beta from Saccharophagus degradans (strain 2-40 / ATCC 43961 / DSM 17024).